The primary structure comprises 185 residues: ATP-dependent protease subunit HslV (185 aa).

Thr-14 is an active-site residue. Na(+) is bound by residues Ala-168, Cys-171, and Thr-174.

The protein belongs to the peptidase T1B family. HslV subfamily. As to quaternary structure, a double ring-shaped homohexamer of HslV is capped on each side by a ring-shaped HslU homohexamer. The assembly of the HslU/HslV complex is dependent on binding of ATP.

The protein resides in the cytoplasm. The enzyme catalyses ATP-dependent cleavage of peptide bonds with broad specificity.. Allosterically activated by HslU binding. Functionally, protease subunit of a proteasome-like degradation complex believed to be a general protein degrading machinery. This chain is ATP-dependent protease subunit HslV, found in Hyphomonas neptunium (strain ATCC 15444).